Here is a 109-residue protein sequence, read N- to C-terminus: Nucleoid-associated protein swp_1717 (109 aa).

The disordered stretch occupies residues 88 to 109 (QKDKMAEVTGGMQLPPGMKMPF).

Belongs to the YbaB/EbfC family. As to quaternary structure, homodimer.

Its subcellular location is the cytoplasm. The protein localises to the nucleoid. Its function is as follows. Binds to DNA and alters its conformation. May be involved in regulation of gene expression, nucleoid organization and DNA protection. The protein is Nucleoid-associated protein swp_1717 of Shewanella piezotolerans (strain WP3 / JCM 13877).